Reading from the N-terminus, the 287-residue chain is ATP synthase gamma chain (287 aa).

Belongs to the ATPase gamma chain family. In terms of assembly, F-type ATPases have 2 components, CF(1) - the catalytic core - and CF(0) - the membrane proton channel. CF(1) has five subunits: alpha(3), beta(3), gamma(1), delta(1), epsilon(1). CF(0) has three main subunits: a, b and c.

The protein resides in the cell inner membrane. In terms of biological role, produces ATP from ADP in the presence of a proton gradient across the membrane. The gamma chain is believed to be important in regulating ATPase activity and the flow of protons through the CF(0) complex. The polypeptide is ATP synthase gamma chain (Tolumonas auensis (strain DSM 9187 / NBRC 110442 / TA 4)).